A 238-amino-acid chain; its full sequence is Adapter protein MecA (238 aa).

Positions 120 to 136 (QQQKDNKQNQDQNERNR) are enriched in basic and acidic residues. The disordered stretch occupies residues 120-139 (QQQKDNKQNQDQNERNRQNT).

The protein belongs to the MecA family. As to quaternary structure, homodimer.

In terms of biological role, enables the recognition and targeting of unfolded and aggregated proteins to the ClpC protease or to other proteins involved in proteolysis. The protein is Adapter protein MecA of Staphylococcus saprophyticus subsp. saprophyticus (strain ATCC 15305 / DSM 20229 / NCIMB 8711 / NCTC 7292 / S-41).